The chain runs to 239 residues: Pre-mRNA-splicing factor isy1 (239 aa).

Belongs to the ISY1 family. Associated with the spliceosome.

The protein resides in the cytoplasm. It localises to the nucleus. Involved in pre-mRNA splicing. The protein is Pre-mRNA-splicing factor isy1 (msp-7) of Neurospora crassa (strain ATCC 24698 / 74-OR23-1A / CBS 708.71 / DSM 1257 / FGSC 987).